Reading from the N-terminus, the 228-residue chain is Methylthioribulose-1-phosphate dehydratase (228 aa).

Cys92 contacts substrate. Zn(2+)-binding residues include His110 and His112. The active-site Proton donor/acceptor is Glu135. His192 is a Zn(2+) binding site.

Belongs to the aldolase class II family. MtnB subfamily. The cofactor is Zn(2+).

It is found in the cytoplasm. The protein resides in the nucleus. It catalyses the reaction 5-(methylsulfanyl)-D-ribulose 1-phosphate = 5-methylsulfanyl-2,3-dioxopentyl phosphate + H2O. It functions in the pathway amino-acid biosynthesis; L-methionine biosynthesis via salvage pathway; L-methionine from S-methyl-5-thio-alpha-D-ribose 1-phosphate: step 2/6. In terms of biological role, catalyzes the dehydration of methylthioribulose-1-phosphate (MTRu-1-P) into 2,3-diketo-5-methylthiopentyl-1-phosphate (DK-MTP-1-P). In Schizosaccharomyces pombe (strain 972 / ATCC 24843) (Fission yeast), this protein is Methylthioribulose-1-phosphate dehydratase.